A 591-amino-acid chain; its full sequence is MEAVTEGGWSSLPVALSPGVLRALQDLGFDRMTPVQSATIPLFMSNKDVAAEAVTGSGKTLAFVIPILEILLRREEKLKKMQVGAIIITPTRELAIQIDEVLTHFTKHFPKFSQILLIGGRNPMEDVEKFKEHGGNIIVATPGRLEDLFRRKADGLDLASCVKSLDVLVLDEADRLLDMGFESSLNAILAFLPKQRRTGLFSATQTQEVENLVRAGLRNPVRISVKEKGVAATNTQKTPTRLENYYMICKADEKFNQLVHFLRQHKQEKHLVFFSTCACVEYYGKALESLIKQVKIMCIHGKMKHKRNKIFTEFRRLAGGILVCTDVMARGIDIPEVHWVLQYDPPSSASAFVHRCGRTARIGNAGSALVFLLPMEESYINFLSINQKCPMQEMQPQRNVLDLLPKLKSMALADRAVFEKGMKAFVSYIQAYAKHECNLIFRIKDLDFASLAKGFALLKMPKMPELRGKCFPDFTPVTVNTDSIPFKDKNREKQRQKQLEQQRKEREESEGKKKFIKNKSWSKQKAKREKKRKLTAKRKREEGSDMEDEDMEELLNDTRLLKRLKKGKISEEEFEKRLTGSQSKFKEAAAD.

The short motif at 9–37 is the Q motif element; that stretch reads WSSLPVALSPGVLRALQDLGFDRMTPVQS. The Helicase ATP-binding domain occupies 40 to 223; that stretch reads IPLFMSNKDV…RAGLRNPVRI (184 aa). 53 to 60 is a binding site for ATP; it reads AVTGSGKT. The DEAD box motif lies at 171-174; that stretch reads DEAD. The Helicase C-terminal domain maps to 254-402; that stretch reads KFNQLVHFLR…EMQPQRNVLD (149 aa). Disordered stretches follow at residues 482–559 and 571–591; these read DSIP…NDTR and EEEFEKRLTGSQSKFKEAAAD. A compositionally biased stretch (basic and acidic residues) spans 485-513; the sequence is PFKDKNREKQRQKQLEQQRKEREESEGKK. Residues 486–542 adopt a coiled-coil conformation; that stretch reads FKDKNREKQRQKQLEQQRKEREESEGKKKFIKNKSWSKQKAKREKKRKLTAKRKREE. A compositionally biased stretch (basic residues) spans 514–538; that stretch reads KFIKNKSWSKQKAKREKKRKLTAKR. The important for nuclear localization stretch occupies residues 533–562; the sequence is KLTAKRKREEGSDMEDEDMEELLNDTRLLK. Acidic residues predominate over residues 544 to 555; the sequence is SDMEDEDMEELL.

Belongs to the DEAD box helicase family. DDX55/SPB4 subfamily. Interacts with 28S rRNA. Interacts with double-stranded RNA substrates in vitro; the interaction stimulates ATPase activity.

The protein localises to the nucleus. It is found in the nucleoplasm. It carries out the reaction ATP + H2O = ADP + phosphate + H(+). Probable ATP-binding RNA helicase. Has ATPase activity and is involved in the maturation of precursor large subunit rRNAs. The protein is ATP-dependent RNA helicase DDX55 (DDX55) of Gallus gallus (Chicken).